The primary structure comprises 85 residues: U4-theraphotoxin-Hhn1ad (85 aa).

Positions 1–22 (MKVTLIAILTCAAVLVLHTTAA) are cleaved as a signal peptide. Residues 23–48 (EELKTESQLMEVGMPDTELATVDEER) constitute a propeptide that is removed on maturation. Cystine bridges form between C52/C66, C56/C77, and C71/C82.

The protein belongs to the neurotoxin 12 (Hwtx-2) family. 02 (Hwtx-2) subfamily. As to expression, expressed by the venom gland.

It is found in the secreted. In terms of biological role, postsynaptic neurotoxin. This chain is U4-theraphotoxin-Hhn1ad, found in Cyriopagopus hainanus (Chinese bird spider).